The primary structure comprises 1484 residues: Chromosome partition protein MukB (1484 aa).

34–41 (GGNGAGKS) serves as a coordination point for ATP. Coiled coils occupy residues 338–415 (NLVQ…RAIQ), 496–604 (QTAR…ALAW), 781–805 (AARESRLENLSAERDVLAERYATLS), 835–868 (EAEMRTLNGRRGELERELSDHHGQNQQSRQHYDQ), 903–1115 (HDAQ…SAKA), and 1206–1265 (DDPV…LQAV). Residues 666-783 (PGGTDDARLT…AVPLFGRAAR (118 aa)) form a flexible hinge region.

It belongs to the SMC family. MukB subfamily. In terms of assembly, homodimerization via its hinge domain. Binds to DNA via its C-terminal region. Interacts, and probably forms a ternary complex, with MukE and MukF via its C-terminal region. The complex formation is stimulated by calcium or magnesium. Interacts with tubulin-related protein FtsZ.

The protein localises to the cytoplasm. It is found in the nucleoid. Plays a central role in chromosome condensation, segregation and cell cycle progression. Functions as a homodimer, which is essential for chromosome partition. Involved in negative DNA supercoiling in vivo, and by this means organize and compact chromosomes. May achieve or facilitate chromosome segregation by condensation DNA from both sides of a centrally located replisome during cell division. The sequence is that of Chromosome partition protein MukB from Sodalis glossinidius (strain morsitans).